We begin with the raw amino-acid sequence, 156 residues long: ATP synthase subunit b (156 aa).

Residues 12–32 (VAFLIFVLFCMKFIWPPVIAA) traverse the membrane as a helical segment.

This sequence belongs to the ATPase B chain family. As to quaternary structure, F-type ATPases have 2 components, F(1) - the catalytic core - and F(0) - the membrane proton channel. F(1) has five subunits: alpha(3), beta(3), gamma(1), delta(1), epsilon(1). F(0) has three main subunits: a(1), b(2) and c(10-14). The alpha and beta chains form an alternating ring which encloses part of the gamma chain. F(1) is attached to F(0) by a central stalk formed by the gamma and epsilon chains, while a peripheral stalk is formed by the delta and b chains.

The protein localises to the cell inner membrane. F(1)F(0) ATP synthase produces ATP from ADP in the presence of a proton or sodium gradient. F-type ATPases consist of two structural domains, F(1) containing the extramembraneous catalytic core and F(0) containing the membrane proton channel, linked together by a central stalk and a peripheral stalk. During catalysis, ATP synthesis in the catalytic domain of F(1) is coupled via a rotary mechanism of the central stalk subunits to proton translocation. Its function is as follows. Component of the F(0) channel, it forms part of the peripheral stalk, linking F(1) to F(0). This Pseudomonas fluorescens (strain ATCC BAA-477 / NRRL B-23932 / Pf-5) protein is ATP synthase subunit b.